The chain runs to 125 residues: uncharacterized protein (125 aa).

The stretch at 5–33 forms a coiled coil; that stretch reads NLTVEQLAAELTKLQMENSHLKRKLRRSV. Disordered stretches follow at residues 22–50 and 96–125; these read NSHLKRKLRRSVGGPPKEPPKPRELTEPE and FRLHFRPDPSENPEKKLSKEKRRTARGQQQ. 2 stretches are compositionally biased toward basic and acidic residues: residues 39–50 and 96–112; these read EPPKPRELTEPE and FRLHFRPDPSENPEKKL. Residues 113–125 show a composition bias toward basic residues; the sequence is SKEKRRTARGQQQ.

The protein belongs to the herpesviridae BLRF2 family.

This is an uncharacterized protein from Connochaetes taurinus (Blue wildebeest).